Consider the following 839-residue polypeptide: uncharacterized protein (839 aa).

This is an uncharacterized protein from Mycoplasma pneumoniae (strain ATCC 29342 / M129 / Subtype 1) (Mycoplasmoides pneumoniae).